The sequence spans 218 residues: MNLLFRLAVFLSLWCCSDAQGQTKEESTEEVKIEVLHRPENCSKTSRKGDLLNAHYDGYLAKDGSKFYCSRTQDEGHPKWFVLGVGHVIKGLDIAMMDMCPGEKRKVIIPPSFAYGKEGYAEGKIPPNATLMFEIELYAVTKGPRSIETFKQIDTDNDRQLSKAEIELYLQKDFEKDANPRDKSYQKAVLEDIFKKNDHNGDGFISPKEYNVHQHDEL.

An N-terminal signal peptide occupies residues M1–A19. N-linked (GlcNAc...) asparagine glycans are attached at residues N41 and N128. Residues G49–T141 form the PPIase FKBP-type domain. EF-hand domains are found at residues T141–K176 and Y185–L218. Residues D154, D156, D158, Q160, E165, D198, N200, D202, and E209 each coordinate Ca(2+). Residues N197–L218 form a disordered region. A Prevents secretion from ER motif is present at residues H215–L218.

Post-translationally, glycosylated. Expressed at highest levels in heart, lung and testis. Weakly expressed in kidney and lymph node. Little or no expression detected in brain, thymus, spleen and liver.

The protein resides in the endoplasmic reticulum lumen. It carries out the reaction [protein]-peptidylproline (omega=180) = [protein]-peptidylproline (omega=0). Its function is as follows. PPIases accelerate the folding of proteins during protein synthesis. This is Peptidyl-prolyl cis-trans isomerase FKBP7 (Fkbp7) from Mus musculus (Mouse).